The primary structure comprises 284 residues: Nucleotide-binding protein CPS_4546 (284 aa).

An ATP-binding site is contributed by 8-15; the sequence is GRSGSGKS. 56–59 provides a ligand contact to GTP; that stretch reads DVRN.

This sequence belongs to the RapZ-like family.

In terms of biological role, displays ATPase and GTPase activities. The sequence is that of Nucleotide-binding protein CPS_4546 from Colwellia psychrerythraea (strain 34H / ATCC BAA-681) (Vibrio psychroerythus).